Reading from the N-terminus, the 67-residue chain is ATP synthase F(0) complex subunit 8 (67 aa).

A helical membrane pass occupies residues 8-24 (TWFITIISSMITLFILF). The residue at position 54 (K54) is an N6-acetyllysine; alternate. The residue at position 54 (K54) is an N6-succinyllysine; alternate. K57 bears the N6-acetyllysine mark.

This sequence belongs to the ATPase protein 8 family. As to quaternary structure, component of the ATP synthase complex composed at least of ATP5F1A/subunit alpha, ATP5F1B/subunit beta, ATP5MC1/subunit c (homooctomer), MT-ATP6/subunit a, MT-ATP8/subunit 8, ATP5ME/subunit e, ATP5MF/subunit f, ATP5MG/subunit g, ATP5MK/subunit k, ATP5MJ/subunit j, ATP5F1C/subunit gamma, ATP5F1D/subunit delta, ATP5F1E/subunit epsilon, ATP5PF/subunit F6, ATP5PB/subunit b, ATP5PD/subunit d, ATP5PO/subunit OSCP. ATP synthase complex consists of a soluble F(1) head domain (subunits alpha(3) and beta(3)) - the catalytic core - and a membrane F(0) domain - the membrane proton channel (subunits c, a, 8, e, f, g, k and j). These two domains are linked by a central stalk (subunits gamma, delta, and epsilon) rotating inside the F1 region and a stationary peripheral stalk (subunits F6, b, d, and OSCP). Interacts with PRICKLE3.

It is found in the mitochondrion membrane. Its function is as follows. Subunit 8, of the mitochondrial membrane ATP synthase complex (F(1)F(0) ATP synthase or Complex V) that produces ATP from ADP in the presence of a proton gradient across the membrane which is generated by electron transport complexes of the respiratory chain. ATP synthase complex consist of a soluble F(1) head domain - the catalytic core - and a membrane F(1) domain - the membrane proton channel. These two domains are linked by a central stalk rotating inside the F(1) region and a stationary peripheral stalk. During catalysis, ATP synthesis in the catalytic domain of F(1) is coupled via a rotary mechanism of the central stalk subunits to proton translocation. In vivo, can only synthesize ATP although its ATP hydrolase activity can be activated artificially in vitro. Part of the complex F(0) domain. In Mus musculus (Mouse), this protein is ATP synthase F(0) complex subunit 8.